Reading from the N-terminus, the 247-residue chain is Type III pantothenate kinase (247 aa).

7 to 14 (AIGNSRWH) is an ATP binding site. Substrate contacts are provided by residues Y91 and 95–98 (GLDR). Catalysis depends on D97, which acts as the Proton acceptor. D117 lines the K(+) pocket. T120 is a binding site for ATP.

This sequence belongs to the type III pantothenate kinase family. Homodimer. It depends on NH4(+) as a cofactor. The cofactor is K(+).

It localises to the cytoplasm. The enzyme catalyses (R)-pantothenate + ATP = (R)-4'-phosphopantothenate + ADP + H(+). The protein operates within cofactor biosynthesis; coenzyme A biosynthesis; CoA from (R)-pantothenate: step 1/5. In terms of biological role, catalyzes the phosphorylation of pantothenate (Pan), the first step in CoA biosynthesis. This is Type III pantothenate kinase from Synechococcus sp. (strain ATCC 27144 / PCC 6301 / SAUG 1402/1) (Anacystis nidulans).